A 486-amino-acid chain; its full sequence is MGEDKKTARETVEEEPLSPCSRLFNSPDFNCAIIVTMGSKVKGDTPAIIHGLEHTLVNHPRFSSILEMNNGKKPRWVRTKVKVEEHVIVPDVDPDIENPDQYLEDYISKLTTIPMDLSKPLWEMHLLGVKTSNAESYAILKIHHSLGDGMSLMSLLLACTRKTSDPEALPTVAVHKKRFGPSCNSGFFNKIWWLFVGLWFILRLLFNTFVDILMFALTIFVLRDTETPLLAKPGSELIPKRFVHRIISFDDVKLVKNAMKMTVNDVLLGVTQAGLSRYLSRKYDQEATPKSKESMRRIRLRSAIMINLRPNAGIEALADMMAKKSKCRWGNLFGYILLPFSVGLETDPLEYVRQAKATIDRKKHSLEAVFSMAFFKLILKVLGLKASVVLVRKVIHSTTLSFSNVVGPKEEITFHGHPLNYISPCVFGHPHALTLHFQTYANKVIISVTADPTVIPDPHKMCDDLVESLKMIKAAVLERGLYEIEV.

Residues 1–192 (MGEDKKTARE…CNSGFFNKIW (192 aa)) lie on the Cytoplasmic side of the membrane. The active-site Proton acceptor is the His-144. Residues 193–213 (WLFVGLWFILRLLFNTFVDIL) form a helical membrane-spanning segment. Residues 214–486 (MFALTIFVLR…LERGLYEIEV (273 aa)) are Extracellular-facing.

This sequence in the N-terminal section; belongs to the long-chain O-acyltransferase family. In terms of tissue distribution, mostly expressed in inflorescences and flowers, especially at the periphery of petal epidermal cells.

The protein resides in the cell membrane. It localises to the endoplasmic reticulum membrane. It catalyses the reaction an acyl-CoA + a 1,2-diacyl-sn-glycerol = a triacyl-sn-glycerol + CoA. The enzyme catalyses a long chain fatty alcohol + a fatty acyl-CoA = a wax ester + CoA. It functions in the pathway glycerolipid metabolism; triacylglycerol biosynthesis. The protein operates within lipid metabolism. Bifunctional wax ester synthase/diacylglycerol acyltransferase. Involved in cuticular wax biosynthesis. Required for petals development, probably by mediating the production of fatty acids at the plasma membrane in the petal epidermis acting as lubricants that makes petal elongation smooth in narrow space between the sepals and the anthers inside floral buds. This chain is Wax ester synthase/diacylglycerol acyltransferase 11, found in Arabidopsis thaliana (Mouse-ear cress).